The primary structure comprises 235 residues: Ribosome maturation factor RimM (235 aa).

Residues 1–19 (MKHEEANKEIGGRGAEGQR) show a composition bias toward basic and acidic residues. Positions 1-49 (MKHEEANKEIGGRGAEGQRSKRVGGNSKIQNIQSPAPNPQPIVPNTQSP) are disordered. Positions 150-230 (EDEYHVLDLI…RIEITPPPGL (81 aa)) constitute a PRC barrel domain.

It belongs to the RimM family. Binds ribosomal protein uS19.

The protein resides in the cytoplasm. Functionally, an accessory protein needed during the final step in the assembly of 30S ribosomal subunit, possibly for assembly of the head region. Essential for efficient processing of 16S rRNA. May be needed both before and after RbfA during the maturation of 16S rRNA. It has affinity for free ribosomal 30S subunits but not for 70S ribosomes. This chain is Ribosome maturation factor RimM, found in Nostoc punctiforme (strain ATCC 29133 / PCC 73102).